The sequence spans 63 residues: Venom peptide 2a (63 aa).

The N-terminal stretch at 1-22 is a signal peptide; it reads MRGTSFILFAVVVILGFLNANA. AXPX repeat units lie at residues 22 to 25, 26 to 29, 32 to 35, 38 to 41, and 44 to 47; these read AEPL, ANPA, ANPD, and ANPE. The propeptide occupies 23–48; that stretch reads EPLANPAPLANPDPLANPDPLANPEA. Leu62 bears the Leucine amide mark.

In terms of tissue distribution, expressed by the venom gland.

The protein resides in the secreted. Its subcellular location is the target cell membrane. In terms of biological role, antimicrobial peptide. Shows activities against Gram-positive bacteria (S.aureus MIC=50 uM and 200 ug/ml, and B.subtilis MIC=200 ug/ml), Gram-negative bacterium E.coli (MIC=100 uM and 200 ug/ml) and fungi (B.cinerea MIC=5 uM, S.cerevisiae MIC=128 ug/ml, S.pombe MIC=128 ug/ml, A.nidulans MIC=128 ug/ml, and C.albicans MIC=64-100 uM). Shows cytolytic activity against insect cell lines. Its hemolytic activity is controversial, as Baek and colleagues report no activity while Bea and colleagues note a hemolytic activity. In vivo, peptide injection in the vicinity of the head and thorax of lepidopteran larvae induces feeding disorder followed by death due to starvation. Is weakly lethal when tested on water flies (D.magna), but is not lethal on lady beetles (H.convergens). The sequence is that of Venom peptide 2a from Eumenes pomiformis (Potter wasp).